Consider the following 49-residue polypeptide: Zinc-containing ferredoxin (49 aa).

Positions 1–36 (GIDPNYRTSRQVVGEHQGHKVYGPVDPPKVLGIHGT) are N-terminal extension. Residues His16 and His19 each coordinate Zn(2+). Lys29 carries the N6-methyllysine modification. Position 34 (His34) interacts with Zn(2+). The segment at 37-49 (IVXVDFDLCIADG) is ferredoxin. A [3Fe-4S] cluster-binding site is contributed by Cys45.

The cofactor is [3Fe-4S] cluster. Requires [4Fe-4S] cluster as cofactor. Zn(2+) is required as a cofactor.

In terms of biological role, ferredoxins are iron-sulfur proteins that transfer electrons in a wide variety of metabolic reactions. The polypeptide is Zinc-containing ferredoxin (zfx) (Acidianus infernus).